The following is a 166-amino-acid chain: MALVEDNNAVAVSFSEEQEALVLKSWAILKKDSANIALRFFLKIFEVAPSASQMFSFLRNSDVPLEKNPKLKTHAMSVFVMTCEAAAQLRKAGKVTVRDTTLKRLGATHLKYGVGDAHFEVVKFALLDTIKEEVPADMWSPAMKSAWSEAYDHLVAAIKQEMKPAE.

A Globin domain is found at 13–163 (SFSEEQEALV…LVAAIKQEMK (151 aa)). The short motif at 46–50 (EVAPS) is the Homodimerization element. Residues S56, K70, H74, R104, T108, and H109 each coordinate heme b. Positions 116–128 (DAHFEVVKFALLD) match the Homodimerization motif.

It belongs to the plant globin family. Homodimer. Heme b is required as a cofactor. Expressed in coleoptiles, embryos, leaves, seminal roots and roots.

The protein resides in the cytoplasm. The protein localises to the nucleus. It catalyses the reaction Fe(III)-heme b-[protein] + nitric oxide + H2O = Fe(II)-heme b-[protein] + nitrite + 2 H(+). Its activity is regulated as follows. Slowly reduced by ascorbic acid (AA); this reaction may become a source of nitric oxide (NO) during hypoxia. In terms of biological role, phytoglobin that reduces nitrite to nitric oxide under anoxic conditions (e.g. during flooding or in waterlogged soil). May not function as an oxygen storage or transport protein. Has an unusually high affinity for O(2) through a hexacoordinate heme iron because of a very low dissociation constant. This is Anaerobic nitrite reductase NSHB1 from Oryza sativa subsp. japonica (Rice).